We begin with the raw amino-acid sequence, 518 residues long: MEDNKLILALGLSVLFVLLSKLVSSAMKPRLNLPPGPWTLPLIGSLHHLVMKSPQIHRSLRALSEKHGPIMQLWMGEVPAVIVSSPAVAEEVLKHQDLRFADRHLTATIEEVSFGGRDVTFAPYSERWRHLRKICMQELLTAARVRSFQGVREREVARLVRELAADAGAGGDAGVNLNERISKLANDIVMVSSVGGRCSHRDEFLDALEVAKKQITWLSVADLFPSSKLARMVAVAPRKGLASRKRMELVIRRIIQERKDQLMDDSAAGAGEAAAGKDCFLDVLLRLQKEGGTPVPVTDEIIVVLLFDMFTGASETSPTVLIWILAELMRCPRVMAKAQAEVRQAAVGKTRITENDIVGLSYLKMVIKEALRLHSPAPLLNPRKCRETTQVMGYDIPKGTSVFVNMWAICRDPNYWEDPEEFKPERFENNCVDFKGNNFEFLPFGSGRRICPGINLGLANLELALASLLYHFDWKLPNGMLPKDLDMQETPGIVAAKLTTLNMCPVTQIAPSSAEDAS.

A helical transmembrane segment spans residues 6–26 (LILALGLSVLFVLLSKLVSSA). Cys451 lines the heme pocket.

Belongs to the cytochrome P450 family. Heme is required as a cofactor.

Its subcellular location is the membrane. The catalysed reaction is ent-cassa-12,15-diene + 3 reduced [NADPH--hemoprotein reductase] + 3 O2 = ent-3beta-hydroxycassa-12,15-dien-2-one + 3 oxidized [NADPH--hemoprotein reductase] + 4 H2O + 3 H(+). In terms of biological role, enzyme of the diterpenoid metabolism involved in the biosynthesis of antibacterial oryzalides such as phytocassane. Catalyzes the hydroxylation of ent-cassa-12,15-diene to form ent-3beta-hydroxycassa-12,15-dien-2-one. In Oryza sativa subsp. japonica (Rice), this protein is Ent-cassadiene hydroxylase (CYP71Z7).